The chain runs to 426 residues: Glutamate-1-semialdehyde 2,1-aminomutase (426 aa).

Lys265 bears the N6-(pyridoxal phosphate)lysine mark.

The protein belongs to the class-III pyridoxal-phosphate-dependent aminotransferase family. HemL subfamily. In terms of assembly, homodimer. Requires pyridoxal 5'-phosphate as cofactor.

Its subcellular location is the cytoplasm. The enzyme catalyses (S)-4-amino-5-oxopentanoate = 5-aminolevulinate. Its pathway is porphyrin-containing compound metabolism; protoporphyrin-IX biosynthesis; 5-aminolevulinate from L-glutamyl-tRNA(Glu): step 2/2. The sequence is that of Glutamate-1-semialdehyde 2,1-aminomutase from Escherichia fergusonii (strain ATCC 35469 / DSM 13698 / CCUG 18766 / IAM 14443 / JCM 21226 / LMG 7866 / NBRC 102419 / NCTC 12128 / CDC 0568-73).